Reading from the N-terminus, the 102-residue chain is Co-chaperonin GroES (102 aa).

This sequence belongs to the GroES chaperonin family. In terms of assembly, heptamer of 7 subunits arranged in a ring. Interacts with the chaperonin GroEL.

The protein resides in the cytoplasm. Functionally, together with the chaperonin GroEL, plays an essential role in assisting protein folding. The GroEL-GroES system forms a nano-cage that allows encapsulation of the non-native substrate proteins and provides a physical environment optimized to promote and accelerate protein folding. GroES binds to the apical surface of the GroEL ring, thereby capping the opening of the GroEL channel. In Anabaena sp. (strain L31), this protein is Co-chaperonin GroES.